Consider the following 418-residue polypeptide: CinA-like protein (418 aa).

The protein belongs to the CinA family.

The chain is CinA-like protein from Cytophaga hutchinsonii (strain ATCC 33406 / DSM 1761 / CIP 103989 / NBRC 15051 / NCIMB 9469 / D465).